We begin with the raw amino-acid sequence, 501 residues long: Nuclear receptor-binding protein 2 (501 aa).

Residues 1-33 (MAAPEPAPRRAREREREREDESEDESDILEESP) are disordered. A compositionally biased stretch (basic and acidic residues) spans 7–19 (APRRARERERERE). Positions 20–30 (DESEDESDILE) are enriched in acidic residues. A Protein kinase domain is found at 38-306 (QKRREQVNQG…AHSLLFHRVL (269 aa)). Phosphothreonine is present on residues Thr409 and Thr411.

Belongs to the protein kinase superfamily. Ser/Thr protein kinase family.

Its subcellular location is the cytoplasm. May regulate apoptosis of neural progenitor cells during their differentiation. This Homo sapiens (Human) protein is Nuclear receptor-binding protein 2.